The sequence spans 500 residues: NAD(P)H-quinone oxidoreductase chain 4, chloroplastic (500 aa).

14 consecutive transmembrane segments (helical) span residues F4–L24, Y35–F55, I87–V107, L113–S130, L134–M154, F167–L187, I211–H231, H242–V262, A272–A292, I305–D325, G330–G350, L386–T406, I416–M436, and I466–A486.

It belongs to the complex I subunit 4 family.

It localises to the plastid. The protein resides in the chloroplast thylakoid membrane. It catalyses the reaction a plastoquinone + NADH + (n+1) H(+)(in) = a plastoquinol + NAD(+) + n H(+)(out). The catalysed reaction is a plastoquinone + NADPH + (n+1) H(+)(in) = a plastoquinol + NADP(+) + n H(+)(out). This Aethionema grandiflorum (Persian stone-cress) protein is NAD(P)H-quinone oxidoreductase chain 4, chloroplastic.